Here is a 179-residue protein sequence, read N- to C-terminus: Translationally-controlled tumor protein homolog (179 aa).

The TCTP domain occupies 1–179 (MIIYKDIISG…WKHGLEEMKV (179 aa)).

It belongs to the TCTP family.

The protein localises to the cytoplasm. It is found in the cytoskeleton. Its function is as follows. Involved in protein synthesis. Involved in microtubule stabilization. The chain is Translationally-controlled tumor protein homolog from Aspergillus fumigatus (strain ATCC MYA-4609 / CBS 101355 / FGSC A1100 / Af293) (Neosartorya fumigata).